A 345-amino-acid chain; its full sequence is Transcriptional activator hacA (345 aa).

A disordered region spans residues 1 to 106 (MSCDMEKTMS…AQTSRERKRL (106 aa)). The span at 30 to 40 (PADTSLNSADV) shows a compositional bias: polar residues. 2 stretches are compositionally biased toward basic and acidic residues: residues 41–51 (KTQEVKPEEKK) and 77–91 (KTEDEKEQRRIERVL). The region spanning 83-146 (EQRRIERVLR…NRLSQQLAQL (64 aa)) is the bZIP domain. The basic motif stretch occupies residues 85-138 (RRIERVLRNRAAAQTSRERKRLEMEKLENEKIQMEQQNQFLLQRLSQMEAENNR). The leucine-zipper stretch occupies residues 139 to 146 (LSQQLAQL). The segment at 186–210 (RIPFPTPSLSDYSPTLKPSTLAESS) is disordered. The span at 192–210 (PSLSDYSPTLKPSTLAESS) shows a compositional bias: polar residues.

The protein belongs to the bZIP family. In terms of assembly, homodimer.

It localises to the nucleus. Its function is as follows. Transcriptional activator involved in the unfolded protein response (UPR) pathway. Recognizes and binds to the UPR element (UPRE) in the promoter of UPR-regulated genes. Increases the synthesis of endoplasmic reticulum-resident proteins required for protein folding as well as components of the secretory pathway. The chain is Transcriptional activator hacA (hacA) from Aspergillus oryzae (strain ATCC 42149 / RIB 40) (Yellow koji mold).